Reading from the N-terminus, the 198-residue chain is Basic helix-loop-helix transcription factor amos (198 aa).

Residues 76 to 131 (EQQQHHLQANPLGKNQGRSPRYWNKQQRSKPYDKLSTSMSSSTSSASSSSSSSAGF) form a disordered region. A compositionally biased stretch (low complexity) spans 111-129 (STSMSSSTSSASSSSSSSA). Residues 138–190 (KRRLAANARERRRMNSLNDAFDKLRDVVPSLGHDRRLSKYETLQMAQAYIGDL) form the bHLH domain.

In terms of assembly, efficient DNA binding requires dimerization with another bHLH protein. Interacts with Daughterless (da). As to expression, during embryonic development, expression is seen in a small cluster of ectodermal cells during stage 10 which becomes restricted to 1 cell by stage 11. Expression is lost from this cell in the thorax and then the abdomen. Later expression is restricted to sensory organ precursors. Very transient expression was detected in distal leg disks at approximately 0-4 hours after puparium formation (APF), correlating with the anlage of the innervated tarsal claw.

The protein localises to the nucleus. Transcription factor involved in early neurogenesis; sensillum basiconica formation and maybe sensillum trichodea development. Promotes multiple dendritic (MD) neuron formation. Required for olfactory sensilla; regulated by lozenge (lz). The protein is Basic helix-loop-helix transcription factor amos (amos) of Drosophila melanogaster (Fruit fly).